We begin with the raw amino-acid sequence, 329 residues long: 3'-5' exonuclease (329 aa).

The segment at 26–88 is disordered; sequence EEKPKPKKVV…MADVGTPSPE (63 aa). Over residues 46 to 65 the composition is skewed to basic and acidic residues; it reads KNLDTPEIVNKENAEVENPP. Phosphoserine occurs at positions 78 and 86. The 3'-5' exonuclease domain occupies 130–288; sequence TEIVPMAFDM…IGQVIYREIE (159 aa). Residues aspartate 138, glutamate 140, and aspartate 276 each coordinate Mg(2+).

This sequence belongs to the WRNexo family.

It localises to the nucleus. Has exonuclease activity on both single-stranded and duplex templates bearing overhangs, but not blunt ended duplex DNA, and cleaves in a 3'-5' direction. Essential for the formation of DNA replication focal centers. Has an important role in maintaining genome stability. The polypeptide is 3'-5' exonuclease (Drosophila mojavensis (Fruit fly)).